A 233-amino-acid chain; its full sequence is Small ribosomal subunit protein uS3 (233 aa).

Residues 39 to 107 (IRAFLKRKLY…DVNINIKEER (69 aa)) enclose the KH type-2 domain. Over residues 212-222 (MQPEKTEESAP) the composition is skewed to basic and acidic residues. Positions 212–233 (MQPEKTEESAPAKKPRRTRRGK) are disordered. Basic residues predominate over residues 224-233 (KKPRRTRRGK).

It belongs to the universal ribosomal protein uS3 family. As to quaternary structure, part of the 30S ribosomal subunit. Forms a tight complex with proteins S10 and S14.

Binds the lower part of the 30S subunit head. Binds mRNA in the 70S ribosome, positioning it for translation. This chain is Small ribosomal subunit protein uS3, found in Campylobacter jejuni subsp. jejuni serotype O:6 (strain 81116 / NCTC 11828).